Here is a 156-residue protein sequence, read N- to C-terminus: Small ribosomal subunit protein uS7 (156 aa).

This sequence belongs to the universal ribosomal protein uS7 family. In terms of assembly, part of the 30S ribosomal subunit. Contacts proteins S9 and S11.

In terms of biological role, one of the primary rRNA binding proteins, it binds directly to 16S rRNA where it nucleates assembly of the head domain of the 30S subunit. Is located at the subunit interface close to the decoding center, probably blocks exit of the E-site tRNA. The chain is Small ribosomal subunit protein uS7 from Desulfatibacillum aliphaticivorans.